The chain runs to 312 residues: Ornithine carbamoyltransferase (312 aa).

Carbamoyl phosphate is bound by residues Ser50–Thr53, Gln77, Arg101, and His128–Gln131. L-ornithine-binding positions include Asn159, Asp223, and Ser227–Met228. Carbamoyl phosphate-binding positions include Cys263–Leu264 and Arg291.

Belongs to the aspartate/ornithine carbamoyltransferase superfamily. OTCase family.

The protein localises to the cytoplasm. It carries out the reaction carbamoyl phosphate + L-ornithine = L-citrulline + phosphate + H(+). The protein operates within amino-acid biosynthesis; L-arginine biosynthesis; L-arginine from L-ornithine and carbamoyl phosphate: step 1/3. Functionally, reversibly catalyzes the transfer of the carbamoyl group from carbamoyl phosphate (CP) to the N(epsilon) atom of ornithine (ORN) to produce L-citrulline. In Acidothermus cellulolyticus (strain ATCC 43068 / DSM 8971 / 11B), this protein is Ornithine carbamoyltransferase.